A 190-amino-acid chain; its full sequence is Probable thymidylate kinase (190 aa).

Residue 9-16 (GIDGAGKT) coordinates ATP.

This sequence belongs to the thymidylate kinase family.

The enzyme catalyses dTMP + ATP = dTDP + ADP. This Sulfurisphaera tokodaii (strain DSM 16993 / JCM 10545 / NBRC 100140 / 7) (Sulfolobus tokodaii) protein is Probable thymidylate kinase (tmk1).